The sequence spans 216 residues: ATP phosphoribosyltransferase (216 aa).

Belongs to the ATP phosphoribosyltransferase family. Short subfamily. In terms of assembly, heteromultimer composed of HisG and HisZ subunits.

Its subcellular location is the cytoplasm. It carries out the reaction 1-(5-phospho-beta-D-ribosyl)-ATP + diphosphate = 5-phospho-alpha-D-ribose 1-diphosphate + ATP. It participates in amino-acid biosynthesis; L-histidine biosynthesis; L-histidine from 5-phospho-alpha-D-ribose 1-diphosphate: step 1/9. Its function is as follows. Catalyzes the condensation of ATP and 5-phosphoribose 1-diphosphate to form N'-(5'-phosphoribosyl)-ATP (PR-ATP). Has a crucial role in the pathway because the rate of histidine biosynthesis seems to be controlled primarily by regulation of HisG enzymatic activity. In Lachnospira eligens (strain ATCC 27750 / DSM 3376 / VPI C15-48 / C15-B4) (Eubacterium eligens), this protein is ATP phosphoribosyltransferase.